The following is a 319-amino-acid chain: Lipoyl synthase (319 aa).

The disordered stretch occupies residues methionine 1–serine 28. Residues arginine 16 to serine 28 show a composition bias toward basic and acidic residues. [4Fe-4S] cluster contacts are provided by cysteine 61, cysteine 66, cysteine 72, cysteine 87, cysteine 91, cysteine 94, and serine 300. The Radical SAM core domain occupies tryptophan 73–leucine 289.

It belongs to the radical SAM superfamily. Lipoyl synthase family. It depends on [4Fe-4S] cluster as a cofactor.

Its subcellular location is the cytoplasm. The enzyme catalyses [[Fe-S] cluster scaffold protein carrying a second [4Fe-4S](2+) cluster] + N(6)-octanoyl-L-lysyl-[protein] + 2 oxidized [2Fe-2S]-[ferredoxin] + 2 S-adenosyl-L-methionine + 4 H(+) = [[Fe-S] cluster scaffold protein] + N(6)-[(R)-dihydrolipoyl]-L-lysyl-[protein] + 4 Fe(3+) + 2 hydrogen sulfide + 2 5'-deoxyadenosine + 2 L-methionine + 2 reduced [2Fe-2S]-[ferredoxin]. It participates in protein modification; protein lipoylation via endogenous pathway; protein N(6)-(lipoyl)lysine from octanoyl-[acyl-carrier-protein]: step 2/2. Catalyzes the radical-mediated insertion of two sulfur atoms into the C-6 and C-8 positions of the octanoyl moiety bound to the lipoyl domains of lipoate-dependent enzymes, thereby converting the octanoylated domains into lipoylated derivatives. The polypeptide is Lipoyl synthase (Rhodopseudomonas palustris (strain HaA2)).